The chain runs to 262 residues: Ninja-family protein 3 (262 aa).

Residues 48–69 (RRNSLTCNTSKEAAGQSPEEMN) are disordered.

Belongs to the Ninja family.

Its subcellular location is the nucleus. The sequence is that of Ninja-family protein 3 from Zea mays (Maize).